The chain runs to 257 residues: UPF0246 protein Sama_0917 (257 aa).

Belongs to the UPF0246 family.

The sequence is that of UPF0246 protein Sama_0917 from Shewanella amazonensis (strain ATCC BAA-1098 / SB2B).